The primary structure comprises 324 residues: Polyphosphate glucokinase (324 aa).

Positions 53–79 (TSTDATADTPRTSPPSDTAGTTSRHRG) are disordered. Residues 62-74 (PRTSPPSDTAGTT) show a composition bias toward polar residues. ATP is bound at residue 83 to 88 (DIGGSS).

It belongs to the ROK (NagC/XylR) family. In terms of assembly, homodimer.

The enzyme catalyses [phosphate](n) + D-glucose = [phosphate](n-1) + D-glucose 6-phosphate + H(+). It carries out the reaction D-glucose + ATP = D-glucose 6-phosphate + ADP + H(+). Catalyzes the phosphorylation of glucose using polyphosphate or ATP as the phosphoryl donor. This Mycobacterium leprae (strain TN) protein is Polyphosphate glucokinase (ppgK).